The primary structure comprises 141 residues: Nucleoside diphosphate kinase (141 aa).

Positions 11, 59, 87, 93, 104, and 114 each coordinate ATP. The active-site Pros-phosphohistidine intermediate is histidine 117.

This sequence belongs to the NDK family. As to quaternary structure, homotetramer. Mg(2+) is required as a cofactor.

The protein localises to the cytoplasm. The catalysed reaction is a 2'-deoxyribonucleoside 5'-diphosphate + ATP = a 2'-deoxyribonucleoside 5'-triphosphate + ADP. It catalyses the reaction a ribonucleoside 5'-diphosphate + ATP = a ribonucleoside 5'-triphosphate + ADP. In terms of biological role, major role in the synthesis of nucleoside triphosphates other than ATP. The ATP gamma phosphate is transferred to the NDP beta phosphate via a ping-pong mechanism, using a phosphorylated active-site intermediate. The chain is Nucleoside diphosphate kinase from Burkholderia ambifaria (strain MC40-6).